A 113-amino-acid polypeptide reads, in one-letter code: MYGATNDVNALGVVLSSSMATPSLDEEMAVEVASSENLPWMCIVWDDPVNLMSYVTYVFQTILGYSKKRATELMMQVHTEGKAVVSSGERDKVEADVKKLHTAGLWATMQQGG.

Belongs to the ClpS family. In terms of assembly, binds to the N-terminal domain of the chaperone ClpA.

Involved in the modulation of the specificity of the ClpAP-mediated ATP-dependent protein degradation. The protein is ATP-dependent Clp protease adapter protein ClpS of Corynebacterium diphtheriae (strain ATCC 700971 / NCTC 13129 / Biotype gravis).